The primary structure comprises 218 residues: Small ribosomal subunit protein uS3c (218 aa).

Positions 47–118 constitute a KH type-2 domain; sequence VYKNIRNSSN…KLRMTLTEVT (72 aa).

The protein belongs to the universal ribosomal protein uS3 family. As to quaternary structure, part of the 30S ribosomal subunit.

The protein resides in the plastid. The protein localises to the chloroplast. This Physcomitrium patens (Spreading-leaved earth moss) protein is Small ribosomal subunit protein uS3c (rps3).